The chain runs to 465 residues: MNEAFDCVVIGAGPGGYVAAITAAQAGLKTALIEKREAGGTCLNRGCIPSKALLAGAEVVTQIRHADQFGIHVEGFSINYPAMVQRKDSVVRSIRDGLNGLIRSNKITVFSGRGSLISSTEVKILGENPSVIKAHSIILATGSEPRAFPGIPFSAESPRILCSTGVLNLKEIPQKMAIIGGGVIGCEFASLFHTLGSEVSVIEASSQILALNNPDISKTMFDKFTRQGLRFVLEASVSNIEDIGDRVRLTINGNVEEYDYVLVSIGRRLNTENIGLDKAGVICDERGVIPTDATMRTNVPNIYAIGDITGKWQLAHVASHQGIIAARNIAGHKEEIDYSAVPSVIFTFPEVASVGLSPTAAQQQKIPVKVTKFPFRAIGKAVAMGEADGFAAIISHETTQQILGAYVIGPHASSLISEITLAVRNELTLPCIYETIHAHPTLAEVWAESALLAVDTPLHMPPAKK.

Residues 34 to 42, K51, and G114 each bind FAD; that span reads EKREAGGTC. C42 and C47 are oxidised to a cystine. NAD(+)-binding positions include 180–184, E203, V237, and 264–267; these read GGGVI and SIGR. FAD contacts are provided by D307 and A315. The active-site Proton acceptor is the H439.

It belongs to the class-I pyridine nucleotide-disulfide oxidoreductase family. FAD serves as cofactor.

It localises to the cytoplasm. It catalyses the reaction N(6)-[(R)-dihydrolipoyl]-L-lysyl-[protein] + NAD(+) = N(6)-[(R)-lipoyl]-L-lysyl-[protein] + NADH + H(+). The branched-chain alpha-keto dehydrogenase complex catalyzes the overall conversion of alpha-keto acids to acyl-CoA and CO(2). It contains multiple copies of 3 enzymatic components: branched-chain alpha-keto acid decarboxylase (E1), lipoamide acyltransferase (E2) and lipoamide dehydrogenase (E3). This is Dihydrolipoyl dehydrogenase (lpdA) from Chlamydia trachomatis serovar D (strain ATCC VR-885 / DSM 19411 / UW-3/Cx).